The primary structure comprises 270 residues: Tryptophan synthase alpha chain (270 aa).

Active-site proton acceptor residues include E49 and D60.

Belongs to the TrpA family. In terms of assembly, tetramer of two alpha and two beta chains.

The enzyme catalyses (1S,2R)-1-C-(indol-3-yl)glycerol 3-phosphate + L-serine = D-glyceraldehyde 3-phosphate + L-tryptophan + H2O. It functions in the pathway amino-acid biosynthesis; L-tryptophan biosynthesis; L-tryptophan from chorismate: step 5/5. Functionally, the alpha subunit is responsible for the aldol cleavage of indoleglycerol phosphate to indole and glyceraldehyde 3-phosphate. The polypeptide is Tryptophan synthase alpha chain (Pseudomonas fluorescens (strain ATCC BAA-477 / NRRL B-23932 / Pf-5)).